Here is an 82-residue protein sequence, read N- to C-terminus: Small ribosomal subunit protein bS16c (82 aa).

The protein belongs to the bacterial ribosomal protein bS16 family.

It is found in the plastid. The protein localises to the chloroplast. The chain is Small ribosomal subunit protein bS16c from Porphyra purpurea (Red seaweed).